The chain runs to 149 residues: Protein AE7-like 2 (149 aa).

This sequence belongs to the MIP18 family.

May play a role in chromosome segregation through establishment of sister chromatid cohesion. Unable to complement ae7 mutants, and thus probably not involved in the cytosolic iron-sulfur assembly (CIA) pathway. This Arabidopsis thaliana (Mouse-ear cress) protein is Protein AE7-like 2.